A 295-amino-acid chain; its full sequence is Small ribosomal subunit protein uS2 (295 aa).

This sequence belongs to the universal ribosomal protein uS2 family. Component of the small ribosomal subunit. Mature ribosomes consist of a small (40S) and a large (60S) subunit. The 40S subunit contains about 33 different proteins and 1 molecule of RNA (18S). The 60S subunit contains about 49 different proteins and 3 molecules of RNA (25S, 5.8S and 5S). Interacts with RPS21.

The protein resides in the cytoplasm. Functionally, required for the assembly and/or stability of the 40S ribosomal subunit. Required for the processing of the 20S rRNA-precursor to mature 18S rRNA in a late step of the maturation of 40S ribosomal subunits. The sequence is that of Small ribosomal subunit protein uS2 from Paracoccidioides brasiliensis (strain Pb03).